We begin with the raw amino-acid sequence, 196 residues long: Elongation factor Ts (196 aa).

The interval 80 to 83 is involved in Mg(2+) ion dislocation from EF-Tu; sequence TDFV.

This sequence belongs to the EF-Ts family. In terms of assembly, heterotetramer composed of two EF-Ts.EF-Tu dimer complexes.

The protein resides in the cytoplasm. Functionally, associates with the EF-Tu.GDP complex and induces the exchange of GDP to GTP. It remains bound to the aminoacyl-tRNA.EF-Tu.GTP complex up to the GTP hydrolysis stage on the ribosome. The sequence is that of Elongation factor Ts (tsf) from Thermus thermophilus (strain ATCC 27634 / DSM 579 / HB8).